We begin with the raw amino-acid sequence, 1246 residues long: Helicase SWR1 (1246 aa).

Disordered regions lie at residues 1 to 53, 60 to 79, 109 to 188, 202 to 292, and 314 to 381; these read MSEH…PKET, DGSD…SSTA, QSPK…LADA, PVPE…QHLV, and GDGL…DIGP. Positions 27 to 52 are enriched in basic and acidic residues; it reads FAEEDRGSSDTEQLTDNKNDGEEPKE. Residues 149–166 are compositionally biased toward acidic residues; it reads SNQDDQDEELDLEMEEAD. The segment covering 167–178 has biased composition (basic and acidic residues); the sequence is SAGRESGEGNRD. Residues 226–255 are compositionally biased toward polar residues; the sequence is APTSTVSETLPSTKLSLAQPANQTDQSLTD. Acidic residues-rich tracts occupy residues 320–331 and 338–362; these read VEEETMGDEDND and EEED…EEGA. A compositionally biased stretch (basic and acidic residues) spans 363–381; it reads KEDNVDWDDRQDKEGDIGP. Positions 405 to 570 constitute a Helicase ATP-binding domain; the sequence is ASLWSNNMNG…WSLLYFLMPG (166 aa). An ATP-binding site is contributed by 418 to 425; it reads DEMGLGKT. The DEAH box signature appears at 521–524; it reads DEAH. Residues 939 to 1092 form the Helicase C-terminal domain; sequence KLQKLFEMLR…KMVIQEGGFN (154 aa).

Belongs to the SNF2/RAD54 helicase family. SWR1 subfamily. As to quaternary structure, component of the SWR1 chromatin-remodeling complex.

It localises to the nucleus. It catalyses the reaction ATP + H2O = ADP + phosphate + H(+). In terms of biological role, catalytic component of the SWR1 complex which mediates the ATP-dependent exchange of histone H2A for the H2A variant HZT1 leading to transcriptional regulation of selected genes by chromatin remodeling. This is Helicase SWR1 (SWR1) from Cryptococcus neoformans var. neoformans serotype D (strain B-3501A) (Filobasidiella neoformans).